The primary structure comprises 325 residues: Elongation factor P--(R)-beta-lysine ligase (325 aa).

76-78 (SPE) contacts substrate. ATP is bound by residues 100-102 (RNE) and N109. Position 118 (Y118) interacts with substrate. 244–245 (EL) lines the ATP pocket. Position 251 (E251) interacts with substrate. ATP is bound at residue G300.

This sequence belongs to the class-II aminoacyl-tRNA synthetase family. EpmA subfamily. Homodimer.

It catalyses the reaction D-beta-lysine + L-lysyl-[protein] + ATP = N(6)-((3R)-3,6-diaminohexanoyl)-L-lysyl-[protein] + AMP + diphosphate + H(+). Functionally, with EpmB is involved in the beta-lysylation step of the post-translational modification of translation elongation factor P (EF-P) on 'Lys-34'. Catalyzes the ATP-dependent activation of (R)-beta-lysine produced by EpmB, forming a lysyl-adenylate, from which the beta-lysyl moiety is then transferred to the epsilon-amino group of EF-P 'Lys-34'. The sequence is that of Elongation factor P--(R)-beta-lysine ligase from Salmonella gallinarum (strain 287/91 / NCTC 13346).